The following is a 397-amino-acid chain: Phosphoglycerate kinase (397 aa).

Residues 23-25, Arg38, 61-64, Arg122, and Arg155 contribute to the substrate site; these read DFN and HMGK. ATP-binding positions include Lys206, Gly296, Glu327, and 353 to 356; that span reads GGDS.

This sequence belongs to the phosphoglycerate kinase family. In terms of assembly, monomer.

The protein localises to the cytoplasm. It catalyses the reaction (2R)-3-phosphoglycerate + ATP = (2R)-3-phospho-glyceroyl phosphate + ADP. The protein operates within carbohydrate degradation; glycolysis; pyruvate from D-glyceraldehyde 3-phosphate: step 2/5. This chain is Phosphoglycerate kinase, found in Clostridium perfringens (strain SM101 / Type A).